A 524-amino-acid polypeptide reads, in one-letter code: Tubulin-specific chaperone E (524 aa).

Serine 2 is subject to N-acetylserine. The CAP-Gly domain occupies 27 to 71 (GAVPPVAGLWLGVEWDNPERGKHDGSHEGTMYFKCRHPTGGSFVR). LRR repeat units follow at residues 154-175 (NIRVVNLSKNLLSTWDEVVLIA), 180-201 (DLEALDLSENKLQFPSDSPTLT), 206-227 (TLKTLVLNKTGITWTEVLHCAP), 231-253 (VLEELYLKSNNISISERPVNVLQ), 254-275 (KMRLLDLSSNPSIDESQLSLIA), 279-300 (RLEHLVLSDIGLSSIHFPDAEI), and 309-330 (ALKYLIVNDNQISEWSFINELD). Positions 343 to 381 (NPLSKADKAEEIIIAKIAQLRTLNRCQILPEERRGAELD) constitute an LRRCT domain. Lysine 460 bears the N6-acetyllysine mark. Serine 492 bears the Phosphoserine mark.

The protein belongs to the TBCE family. In terms of assembly, supercomplex made of cofactors A to E. Cofactors A and D function by capturing and stabilizing tubulin in a quasi-native conformation. Cofactor E binds to the cofactor D-tubulin complex; interaction with cofactor C then causes the release of tubulin polypeptides that are committed to the native state. Cofactors B and E can form a heterodimer which binds to alpha-tubulin and enhances their ability to dissociate tubulin heterodimers. Interacts with TBCD. In terms of tissue distribution, ubiquitously expressed.

It localises to the cytoplasm. The protein localises to the cytoskeleton. Its function is as follows. Tubulin-folding protein; involved in the second step of the tubulin folding pathway and in the regulation of tubulin heterodimer dissociation. Required for correct organization of microtubule cytoskeleton and mitotic splindle, and maintenance of the neuronal microtubule network. The protein is Tubulin-specific chaperone E (Tbce) of Mus musculus (Mouse).